The following is a 250-amino-acid chain: MALHLGVITLLPEIIQGIHYGVTGRAIEQGLVKIDCWNPRDWSSRPYKQVDDKPYGGGPGMVMMYEPLHAAIKHARSEMKENCKTIYLSPQGKVVRQNDLKQIAAQKQSLLFVAGRYEGIDERIISHHVDEEWSLGDFVLSGGELAAMVFIDAIIRLIPGSLGHLGSAEQDSFMNGLLDCPHYTRPATINGLDVPDVLLGGNHKEIERWRRKQSLGKTWLKRPDLLEKVQLSETDKQLLAEFKCEHGDSC.

S-adenosyl-L-methionine-binding positions include glycine 115 and 135–140; that span reads LGDFVL.

It belongs to the RNA methyltransferase TrmD family. In terms of assembly, homodimer.

The protein localises to the cytoplasm. The catalysed reaction is guanosine(37) in tRNA + S-adenosyl-L-methionine = N(1)-methylguanosine(37) in tRNA + S-adenosyl-L-homocysteine + H(+). Specifically methylates guanosine-37 in various tRNAs. The sequence is that of tRNA (guanine-N(1)-)-methyltransferase from Legionella pneumophila subsp. pneumophila (strain Philadelphia 1 / ATCC 33152 / DSM 7513).